The following is a 280-amino-acid chain: Energy-coupling factor transporter ATP-binding protein EcfA2 (280 aa).

An ABC transporter domain is found at 3-245 (INLQNVSYTY…VSLLEKKQLG (243 aa)). 40 to 47 (GHTGSGKS) serves as a coordination point for ATP.

This sequence belongs to the ABC transporter superfamily. Energy-coupling factor EcfA family. As to quaternary structure, forms a stable energy-coupling factor (ECF) transporter complex composed of 2 membrane-embedded substrate-binding proteins (S component), 2 ATP-binding proteins (A component) and 2 transmembrane proteins (T component).

The protein resides in the cell membrane. In terms of biological role, ATP-binding (A) component of a common energy-coupling factor (ECF) ABC-transporter complex. Unlike classic ABC transporters this ECF transporter provides the energy necessary to transport a number of different substrates. The chain is Energy-coupling factor transporter ATP-binding protein EcfA2 from Streptococcus pyogenes serotype M28 (strain MGAS6180).